The following is a 318-amino-acid chain: Pantothenate kinase (318 aa).

96–103 (GSVAVGKS) contacts ATP.

Belongs to the prokaryotic pantothenate kinase family.

The protein localises to the cytoplasm. The catalysed reaction is (R)-pantothenate + ATP = (R)-4'-phosphopantothenate + ADP + H(+). Its pathway is cofactor biosynthesis; coenzyme A biosynthesis; CoA from (R)-pantothenate: step 1/5. In Afipia carboxidovorans (strain ATCC 49405 / DSM 1227 / KCTC 32145 / OM5) (Oligotropha carboxidovorans), this protein is Pantothenate kinase.